The chain runs to 396 residues: Probable porphobilinogen deaminase (396 aa).

The disordered stretch occupies residues 159–224 (APALHREHER…DTASSSEFEQ (66 aa)). Residues 159 to 245 (APALHREHER…LQQSAMERDP (87 aa)) form an insert region. A compositionally biased stretch (basic and acidic residues) spans 162 to 189 (LHREHERRTEAEKEAQSRDAREQRRGDY). The segment covering 200-215 (LDTEDGEEGAADDGDD) has biased composition (acidic residues). Cysteine 328 is subject to S-(dipyrrolylmethanemethyl)cysteine.

It belongs to the HMBS family. Dipyrromethane is required as a cofactor.

The enzyme catalyses 4 porphobilinogen + H2O = hydroxymethylbilane + 4 NH4(+). It participates in porphyrin-containing compound metabolism; protoporphyrin-IX biosynthesis; coproporphyrinogen-III from 5-aminolevulinate: step 2/4. In terms of biological role, tetrapolymerization of the monopyrrole PBG into the hydroxymethylbilane pre-uroporphyrinogen in several discrete steps. This is Probable porphobilinogen deaminase (hemC) from Halobacterium salinarum (strain ATCC 700922 / JCM 11081 / NRC-1) (Halobacterium halobium).